Reading from the N-terminus, the 226-residue chain is Oxaloacetate tautomerase FAHD2, mitochondrial (226 aa).

The N-terminal 30 residues, 1–30, are a transit peptide targeting the mitochondrion; it reads MAAAAQRLLAASTKIVGVGRNFVAHAKELG. Mg(2+) is bound by residues Glu69, Glu71, and Asp100.

Belongs to the FAH family. Mg(2+) serves as cofactor. It depends on Mn(2+) as a cofactor.

It localises to the mitochondrion. It carries out the reaction oxaloacetate = enol-oxaloacetate. Its function is as follows. Tautomerase that converts enol-oxaloacetate, a strong inhibitor of succinate dehydrogenase, to the physiological keto form of oxaloacetate. This is Oxaloacetate tautomerase FAHD2, mitochondrial from Oryza sativa subsp. japonica (Rice).